The primary structure comprises 482 residues: Lipoamide acyltransferase component of branched-chain alpha-keto acid dehydrogenase complex, mitochondrial (482 aa).

The transit peptide at 1 to 61 directs the protein to the mitochondrion; it reads MAAVRMLRTW…HFLKTTAALR (61 aa). The Lipoyl-binding domain occupies 64 to 139; the sequence is VVQFKLSDIG…YVGKPLVDIE (76 aa). Position 105 is an N6-lipoyllysine (Lys105). Lys133 carries the post-translational modification N6-succinyllysine. A critical for association with PPM1K region spans residues 145–160; it reads DSEEDVVETPAVSHDE. A disordered region spans residues 147-168; it reads EEDVVETPAVSHDEHTHQEIKG. A compositionally biased stretch (basic and acidic residues) spans 157–168; the sequence is SHDEHTHQEIKG. Residues 172–209 enclose the Peripheral subunit-binding (PSBD) domain; sequence LATPAVRRLAMENNIKLSEVVGSGKDGRILKEDILNYL. An N6-acetyllysine; alternate modification is found at Lys196. Lys196 is modified (N6-succinyllysine; alternate). Lys202 bears the N6-acetyllysine mark. Ser220 bears the Phosphoserine mark. Residues Lys243 and Lys250 each carry the N6-acetyllysine modification. Lys261 bears the N6-succinyllysine mark. Lys289 is subject to N6-acetyllysine; alternate. Residue Lys289 is modified to N6-succinyllysine; alternate. Arg291 contributes to the CoA binding site. An N6-acetyllysine mark is found at Lys295 and Lys304. CoA-binding residues include Ser306, Asp349, Gln378, Ser399, Asn400, Ser403, Gly424, and Ile426. At Lys435 the chain carries N6-acetyllysine. Position 440 is an N6-acetyllysine; alternate (Lys440). At Lys440 the chain carries N6-succinyllysine; alternate. Residues His452 and Asp456 contribute to the active site.

The protein belongs to the 2-oxoacid dehydrogenase family. Forms a 24-polypeptide structural core with octahedral symmetry that represents the E2 component of the branched-chain alpha-ketoacid dehydrogenase (BCKDH) complex. The BCKDH complex is composed of three major building blocks E1, E2 and E3. It is organized around E2, a 24-meric cubic core composed of DBT, to which are associated 6 to 12 copies of E1, and approximately 6 copies of the dehydrogenase E3, a DLD dimer. Interacts with PPM1K with a 24:1 stoichiometry; the N-terminal region (residues 49-61) of PPM1K and C-terminal linker of the lipoyl domain of DBT/E2 (residues 145-160) are critical for this interaction whereas the lipoyl prosthetic group is dispensable. This interaction requires colocalization in mitochondria. PPM1K competes with BCKDK for binding to DBT; this interaction is modulated by branched-chain alpha-keto acids (BCKAs). At steady state, BCKDH holoenzyme preferentially binds BCKDK and BCKDHA is phosphorylated. In response to high levels of BCKAs, BCKDK is replaced by PPM1K leading to BCKDHA dephosphorylation. Requires (R)-lipoate as cofactor.

The protein resides in the mitochondrion matrix. The catalysed reaction is N(6)-[(R)-dihydrolipoyl]-L-lysyl-[protein] + 2-methylpropanoyl-CoA = N(6)-[(R)-S(8)-2-methylpropanoyldihydrolipoyl]-L-lysyl-[protein] + CoA. The branched-chain alpha-keto dehydrogenase complex catalyzes the overall conversion of alpha-keto acids to acyl-CoA and CO(2). It contains multiple copies of three enzymatic components: branched-chain alpha-keto acid decarboxylase (E1), lipoamide acyltransferase (E2) and lipoamide dehydrogenase (E3). Within this complex, the catalytic function of this enzyme is to accept, and to transfer to coenzyme A, acyl groups that are generated by the branched-chain alpha-keto acid decarboxylase component. In Homo sapiens (Human), this protein is Lipoamide acyltransferase component of branched-chain alpha-keto acid dehydrogenase complex, mitochondrial.